A 262-amino-acid chain; its full sequence is Glucosamine-6-phosphate deaminase (262 aa).

The active-site Proton acceptor; for enolization step is Asp63. The active-site For ring-opening step is Asn129. His131 (proton acceptor; for ring-opening step) is an active-site residue. Residue Glu136 is the For ring-opening step of the active site.

It belongs to the glucosamine/galactosamine-6-phosphate isomerase family. NagB subfamily.

The catalysed reaction is alpha-D-glucosamine 6-phosphate + H2O = beta-D-fructose 6-phosphate + NH4(+). It participates in amino-sugar metabolism; N-acetylneuraminate degradation; D-fructose 6-phosphate from N-acetylneuraminate: step 5/5. Catalyzes the reversible isomerization-deamination of glucosamine 6-phosphate (GlcN6P) to form fructose 6-phosphate (Fru6P) and ammonium ion. The chain is Glucosamine-6-phosphate deaminase from Bacillus cereus (strain B4264).